Reading from the N-terminus, the 203-residue chain is ATP-dependent Clp protease proteolytic subunit (203 aa).

The active-site Nucleophile is S103. H128 is a catalytic residue.

The protein belongs to the peptidase S14 family. As to quaternary structure, fourteen ClpP subunits assemble into 2 heptameric rings which stack back to back to give a disk-like structure with a central cavity, resembling the structure of eukaryotic proteasomes.

Its subcellular location is the cytoplasm. It carries out the reaction Hydrolysis of proteins to small peptides in the presence of ATP and magnesium. alpha-casein is the usual test substrate. In the absence of ATP, only oligopeptides shorter than five residues are hydrolyzed (such as succinyl-Leu-Tyr-|-NHMec, and Leu-Tyr-Leu-|-Tyr-Trp, in which cleavage of the -Tyr-|-Leu- and -Tyr-|-Trp bonds also occurs).. Functionally, cleaves peptides in various proteins in a process that requires ATP hydrolysis. Has a chymotrypsin-like activity. Plays a major role in the degradation of misfolded proteins. This is ATP-dependent Clp protease proteolytic subunit from Dichelobacter nodosus (strain VCS1703A).